Reading from the N-terminus, the 505-residue chain is MAQIDFRKKINWHRRYRSPQGVKTEHEILRIFESDRGRIINSPAIRRLQQKTQVFPLERNAAVRTRLTHSMEVQQVGRYIAKEILSRLKELKLLEAYGLDELTGPFESIVEMSCLMHDIGNPPFGHLGEAAINDWFRQRLHPEDAESQPLTDDRCSVAGLRLRDGEEPLNELRRKIRQDLCHFEGNAQGIRLVHTLMRMNLTWAQVGGILKYTRPAWWRGETPETHHYLMKKPGYYLSEEAYIARLRKELNLALYSRFPLTWIMEAADDISYCVADLEDAVEKRIFTVEQLYHHLHEAWGQHEKGSLFSLVVENAWEKSRSNSLSRSTEDQFFMYLRVNTLNKLVPYAAQRFIDNLPAIFAGTFNHALLEDASECSDLLKLYKNVAVKHVFSHPDVERLELQGYRVISGLLEIYRPLLSLSLSDFTELVEKERVKRFPIESRLFHKLSTPHRLAYVEAVSKLPSDSPEFPLWEYYYRCRLLQDYISGMTDLYAWDEYRRLMAVEQ.

An HD domain is found at R66 to C273.

The protein belongs to the dGTPase family. Type 1 subfamily. As to quaternary structure, homotetramer. It depends on Mg(2+) as a cofactor.

It catalyses the reaction dGTP + H2O = 2'-deoxyguanosine + triphosphate + H(+). In terms of biological role, dGTPase preferentially hydrolyzes dGTP over the other canonical NTPs. The chain is Deoxyguanosinetriphosphate triphosphohydrolase from Escherichia fergusonii (strain ATCC 35469 / DSM 13698 / CCUG 18766 / IAM 14443 / JCM 21226 / LMG 7866 / NBRC 102419 / NCTC 12128 / CDC 0568-73).